The following is a 476-amino-acid chain: Aspartyl/glutamyl-tRNA(Asn/Gln) amidotransferase subunit B (476 aa).

Belongs to the GatB/GatE family. GatB subfamily. Heterotrimer of A, B and C subunits.

The enzyme catalyses L-glutamyl-tRNA(Gln) + L-glutamine + ATP + H2O = L-glutaminyl-tRNA(Gln) + L-glutamate + ADP + phosphate + H(+). It carries out the reaction L-aspartyl-tRNA(Asn) + L-glutamine + ATP + H2O = L-asparaginyl-tRNA(Asn) + L-glutamate + ADP + phosphate + 2 H(+). Allows the formation of correctly charged Asn-tRNA(Asn) or Gln-tRNA(Gln) through the transamidation of misacylated Asp-tRNA(Asn) or Glu-tRNA(Gln) in organisms which lack either or both of asparaginyl-tRNA or glutaminyl-tRNA synthetases. The reaction takes place in the presence of glutamine and ATP through an activated phospho-Asp-tRNA(Asn) or phospho-Glu-tRNA(Gln). The polypeptide is Aspartyl/glutamyl-tRNA(Asn/Gln) amidotransferase subunit B (Listeria monocytogenes serotype 4b (strain CLIP80459)).